The chain runs to 688 residues: Complement C1s subcomponent (688 aa).

A signal peptide spans 1 to 15 (MWCIVLFSLLAWVYA). Positions 16 to 130 (EPTMYGEILS…TGFAAYYVAT (115 aa)) constitute a CUB 1 domain. Glu-60, Asp-68, Asp-113, Asp-131, Ile-132, and Glu-134 together coordinate Ca(2+). Residues Cys-65 and Cys-83 are joined by a disulfide bond. An EGF-like; calcium-binding domain is found at 131–172 (DINECTDFVDVPCSHFCNNFIGGYFCSCPPEYFLHDDMKNCG). 3 cysteine pairs are disulfide-bonded: Cys-135-Cys-147, Cys-143-Cys-156, and Cys-158-Cys-171. Asn-149, Phe-150, and Gly-153 together coordinate Ca(2+). Asn-149 carries the post-translational modification (3R)-3-hydroxyasparagine. Residue Asn-174 is glycosylated (N-linked (GlcNAc...) asparagine). Cysteines 175 and 202 form a disulfide. Positions 175-290 (CSGDVFTALI…KGWKLRYHGD (116 aa)) constitute a CUB 2 domain. Glu-226, Asp-236, Asp-275, Gly-278, and Gln-279 together coordinate Ca(2+). Cys-234 and Cys-251 are joined by a disulfide. 2 consecutive Sushi domains span residues 292–356 (MPCP…KCQP) and 357–423 (VDCG…KCVP). 7 disulfides stabilise this stretch: Cys-294-Cys-341, Cys-321-Cys-354, Cys-359-Cys-403, Cys-386-Cys-421, Cys-425-Cys-549, Cys-595-Cys-618, and Cys-628-Cys-659. An N-linked (GlcNAc...) asparagine glycan is attached at Asn-406. The 243-residue stretch at 438–680 (IIGGSDADIK…YVDWIMKTMQ (243 aa)) folds into the Peptidase S1 domain. Residues His-475 and Asp-529 each act as charge relay system in the active site. Ser-632 functions as the Charge relay system in the catalytic mechanism.

It belongs to the peptidase S1 family. As to quaternary structure, core component of the complement C1 complex, a calcium-dependent complex composed of 1 molecule of the C1Q subcomplex, 2 molecules of C1R and 2 molecules of C1S. The C1Q subcomplex is composed 18 subunits: 3 chains of C1QA, C1QB, and C1QC trimerize to form 6 collagen-like triple helices connected to six globular ligand-recognition modules. In terms of processing, cleaved and activated by C1R to generate Complement C1s subcomponent heavy and light chains. The iron and 2-oxoglutarate dependent 3-hydroxylation of aspartate and asparagine is (R) stereospecific within EGF domains.

Its subcellular location is the secreted. It is found in the cell surface. It catalyses the reaction Cleavage of Arg-|-Ala bond in complement component C4 to form C4a and C4b, and Lys(or Arg)-|-Lys bond in complement component C2 to form C2a and C2b: the 'classical' pathway C3 convertase.. With respect to regulation, cleaved and activated by C1R. Immunoglobulin-binding promotes autoactivation of C1R, which results in the cleavage of the Arg-Ile bond in the catalytic domain. Inhibited by C1 inhibitor (SERPING1). Its function is as follows. Component of the complement C1 complex, a multiprotein complex that initiates the classical pathway of the complement system, a cascade of proteins that leads to phagocytosis and breakdown of pathogens and signaling that strengthens the adaptive immune system. C1S is activated following association of the C1 complex with immunoglobulins (IgG or IgM) complexed with antigens to form antigen-antibody complexes on the surface of pathogens. C1S is cleaved and activated by C1R to generate C1s subcomponent heavy and light chains. C1s subcomponent light chain then cleaves and activates C2 and C4, the next components of the classical complement pathway. Functionally, serine protease component of the complement C1 complex, which catalyzes cleavage and activation of C2 and C4, the next components of the classical complement pathway. Also able to cleave C1 inhibitor (SERPING1) in vitro; additional evidence is however required to confirm this result in vivo. Also cleaves IGFBP5 and thereby inhibits the trophic effects of IGF1. The protein is Complement C1s subcomponent of Homo sapiens (Human).